Reading from the N-terminus, the 99-residue chain is Large ribosomal subunit protein bL21 (99 aa).

It belongs to the bacterial ribosomal protein bL21 family. In terms of assembly, part of the 50S ribosomal subunit. Contacts protein L20.

Functionally, this protein binds to 23S rRNA in the presence of protein L20. This is Large ribosomal subunit protein bL21 from Mesomycoplasma hyopneumoniae (strain 7448) (Mycoplasma hyopneumoniae).